Here is a 232-residue protein sequence, read N- to C-terminus: Probable caffeoyl-CoA O-methyltransferase At4g26220 (232 aa).

Position 7 (Lys7) interacts with substrate. S-adenosyl-L-methionine is bound by residues Thr49, Glu71, 73–74 (GV), Ser79, Asp97, and Ala126. Asp149 serves as a coordination point for substrate. Asp149 serves as a coordination point for a divalent metal cation. Position 151 (Asp151) interacts with S-adenosyl-L-methionine. Asp175 and Asn176 together coordinate a divalent metal cation.

This sequence belongs to the class I-like SAM-binding methyltransferase superfamily. Cation-dependent O-methyltransferase family. CCoAMT subfamily. A divalent metal cation serves as cofactor.

The catalysed reaction is (E)-caffeoyl-CoA + S-adenosyl-L-methionine = (E)-feruloyl-CoA + S-adenosyl-L-homocysteine + H(+). It participates in aromatic compound metabolism; phenylpropanoid biosynthesis. Methylates caffeoyl-CoA to feruloyl-CoA and 5-hydroxyferuloyl-CoA to sinapoyl-CoA. Plays a role in the synthesis of feruloylated polysaccharides. Involved in the reinforcement of the plant cell wall. Also involved in the responding to wounding or pathogen challenge by the increased formation of cell wall-bound ferulic acid polymers. The protein is Probable caffeoyl-CoA O-methyltransferase At4g26220 of Arabidopsis thaliana (Mouse-ear cress).